The chain runs to 100 residues: MSNLRIVCQHCPSVVFNNKRPDVVKRPTMSAMLHSETQEDLETDDFFLLKDPFAFDNVSVSKPLANNYKLLACADCEKGPLGYYDSKNNEYLLLCSLEKN.

In terms of domain architecture, MSS4 spans 1 to 100; that stretch reads MSNLRIVCQH…YLLLCSLEKN (100 aa). Zn(2+) is bound by residues Cys8, Cys11, Cys73, and Cys76.

Belongs to the DSS4/MSS4 family.

Functionally, guanine-nucleotide-releasing protein that acts on members of the sec4/ypt1/rab subfamily. The chain is Guanine nucleotide exchange factor MSS4 homolog from Schizosaccharomyces pombe (strain 972 / ATCC 24843) (Fission yeast).